The chain runs to 413 residues: Unsaturated 3S-rhamnoglycuronyl hydrolase (413 aa).

The first 21 residues, 1 to 21 (MNHTKLKLSAVALTLALGLSA), serve as a signal peptide directing secretion. A lipid anchor (N-palmitoyl cysteine) is attached at Cys22. Cys22 carries S-diacylglycerol cysteine lipidation. The active-site Proton donor is Asp203.

This sequence belongs to the glycosyl hydrolase 105 family.

Its subcellular location is the cell membrane. In terms of biological role, glucuronyl hydrolase involved in ulvan degradation. Ulvan is the main polysaccharide component of the Ulvales (green seaweed) cell wall. It is composed of disaccharide building blocks comprising 3-sulfated rhamnose (Rha3S) linked to D-glucuronic acid (GlcA), L-iduronic acid (IduA), or D-xylose (Xyl). Unsaturated 3S-rhamnoglycuronyl hydrolase works together with ulvan lyases to fully degrade the ulvan polymer, catalyzing specifically the cleavage of the unsaturated 4-deoxy-L-threo-hex-4-enopyranosiduronic acid (deltaUA) of the deltaUA-oligosaccharides deltaUA-Rha3S, deltaUA-Rha3S-IduA-Rha3S and deltaUA-Rha3S-Xyl-Rha3S, the end products of the ulvan lyase reaction. The chain is Unsaturated 3S-rhamnoglycuronyl hydrolase from Alteromonas sp. (strain LOR).